Consider the following 480-residue polypeptide: Aspartyl/glutamyl-tRNA(Asn/Gln) amidotransferase subunit B (480 aa).

It belongs to the GatB/GatE family. GatB subfamily. As to quaternary structure, heterotrimer of A, B and C subunits.

It carries out the reaction L-glutamyl-tRNA(Gln) + L-glutamine + ATP + H2O = L-glutaminyl-tRNA(Gln) + L-glutamate + ADP + phosphate + H(+). The enzyme catalyses L-aspartyl-tRNA(Asn) + L-glutamine + ATP + H2O = L-asparaginyl-tRNA(Asn) + L-glutamate + ADP + phosphate + 2 H(+). In terms of biological role, allows the formation of correctly charged Asn-tRNA(Asn) or Gln-tRNA(Gln) through the transamidation of misacylated Asp-tRNA(Asn) or Glu-tRNA(Gln) in organisms which lack either or both of asparaginyl-tRNA or glutaminyl-tRNA synthetases. The reaction takes place in the presence of glutamine and ATP through an activated phospho-Asp-tRNA(Asn) or phospho-Glu-tRNA(Gln). The protein is Aspartyl/glutamyl-tRNA(Asn/Gln) amidotransferase subunit B of Saccharophagus degradans (strain 2-40 / ATCC 43961 / DSM 17024).